The following is a 294-amino-acid chain: Probable HTH-type transcriptional regulator LrrA (294 aa).

The 58-residue stretch at 1-58 (MNITQLQILAAVVETGNFSAAALQLDLSQSAVSRAIAALEDELGVVLLSRGRFGARPT) folds into the HTH lysR-type domain. The H-T-H motif DNA-binding region spans 18–37 (FSAAALQLDLSQSAVSRAIA).

The protein belongs to the LysR transcriptional regulatory family.

This Synechococcus elongatus (strain ATCC 33912 / PCC 7942 / FACHB-805) (Anacystis nidulans R2) protein is Probable HTH-type transcriptional regulator LrrA (lrrA).